Consider the following 588-residue polypeptide: Aspartate--tRNA ligase (588 aa).

E177 is a binding site for L-aspartate. Positions 201–204 (QIFK) are aspartate. Residue R223 participates in L-aspartate binding. ATP contacts are provided by residues 223-225 (RDE) and Q232. H451 lines the L-aspartate pocket. E485 contributes to the ATP binding site. An L-aspartate-binding site is contributed by R492. 537 to 540 (GLDR) is an ATP binding site.

Belongs to the class-II aminoacyl-tRNA synthetase family. Type 1 subfamily. As to quaternary structure, homodimer.

The protein localises to the cytoplasm. The catalysed reaction is tRNA(Asp) + L-aspartate + ATP = L-aspartyl-tRNA(Asp) + AMP + diphosphate. Its function is as follows. Catalyzes the attachment of L-aspartate to tRNA(Asp) in a two-step reaction: L-aspartate is first activated by ATP to form Asp-AMP and then transferred to the acceptor end of tRNA(Asp). In Staphylococcus saprophyticus subsp. saprophyticus (strain ATCC 15305 / DSM 20229 / NCIMB 8711 / NCTC 7292 / S-41), this protein is Aspartate--tRNA ligase.